The chain runs to 288 residues: GDSL esterase/lipase At3g43550 (288 aa).

Positions 1–19 are cleaved as a signal peptide; the sequence is MKLQIIWLALVLIAVETYA. An N-linked (GlcNAc...) asparagine glycan is attached at N25. S37 acts as the Nucleophile in catalysis.

It belongs to the 'GDSL' lipolytic enzyme family.

Its subcellular location is the secreted. This Arabidopsis thaliana (Mouse-ear cress) protein is GDSL esterase/lipase At3g43550.